Here is a 1288-residue protein sequence, read N- to C-terminus: MAGPCPRSGAERAGSCWQDPLAVALSRGRQLAAPPGRGCARSRPLSVVYVLTREPQPGLEPREGTEAEPLPLRCLREACAQVPRPRPPPQLRSLPFGTLELGDTAALDAFYNADVVVLEVSSSLVQPSLFYHLGVRESFSMTNNVLLCSQADLPDLQALREDVFQKNSDCVGSYTLIPYVVTATGRVLCGDAGLLRGLADGLVQAGVGTEALLTPLVGRLARLLEATPTDSCGYFRETIRRDIRQARERFSGPQLRQELARLQRRLDSVELLSPDIIMNLLLSYRDVQDYSAIIELVETLQALPTCDVAEQHNVCFHYTFALNRRNRPGDRAKALSVLLPLVQLEGSVAPDLYCMCGRIYKDMFFSSGFQDAGHREQAYHWYRKAFDVEPSLHSGINAAVLLIAAGQHFEDSKELRLIGMKLGCLLARKGCVEKMQYYWDVGFYLGAQILANDPTQVVLAAEQLYKLNAPIWYLVSVMETFLLYQHFRPTPEPPGGPPRRAHFWLHFLLQSCQPFKTACAQGDQCLVLVLEMNKVLLPAKLEVRGTDPVSTVTLSLLEPETQDIPSSWTFPVASICGVSASKRDERCCFLYALPPAQDVQLCFPSVGHCQWFCGLIQAWVTNPDSTAPAEEAEGAGEMLEFDYEYTETGERLVLGKGTYGVVYAGRDRHTRVRIAIKEIPERDSRFSQPLHEEIALHRRLRHKNIVRYLGSASQGGYLKIFMEEVPGGSLSSLLRSVWGPLKDNESTISFYTRQILQGLGYLHDNHIVHRDIKGDNVLINTFSGLLKISDFGTSKRLAGITPCTETFTGTLQYMAPEIIDQGPRGYGKAADIWSLGCTVIEMATGRPPFHELGSPQAAMFQVGMYKVHPPMPSSLSAEAQAFLLRTFEPDPRLRASAQTLLGDPFLQPGKRSRSPSSPRHAPRPSDAPSASPTPSANSTTQSQTFPCPQAPSQHPPSPPKRCLSYGGTSQLRVPEEPAAEEPASPEESSGLSLLHQESKRRAMLAAVLEQELPALAENLHQEQKQEQGARLGRNHVEELLRCLGAHIHTPNRRQLAQELRALQGRLRAQGLGPALLHRPLFAFPDAVKQILRKRQIRPHWMFVLDSLLSRAVRAALGVLGPEVEKEAVSPRSEELSNEGDSQQSPGQQSPLPVEPEQGPAPLMVQLSLLRAETDRLREILAGKEREYQALVQRALQRLNEEARTYVLAPEPPTALSTDQGLVQWLQELNVDSGTIQMLLNHSFTLHTLLTYATRDDLIYTRIRGGMVCRIWRAILAQRAGSTPVTSGP.

The Protein kinase domain occupies 648–906 (TGERLVLGKG…AQTLLGDPFL (259 aa)). ATP is bound by residues 654-662 (LGKGTYGVV) and lysine 677. Aspartate 771 acts as the Proton acceptor in catalysis. Threonine 806 is subject to Phosphothreonine. The segment at 899-997 (TLLGDPFLQP…SSGLSLLHQE (99 aa)) is disordered. Low complexity predominate over residues 914-952 (SPSSPRHAPRPSDAPSASPTPSANSTTQSQTFPCPQAPS). Phosphoserine is present on residues serine 964 and serine 984. Residues 980-989 (EEPASPEESS) show a composition bias toward low complexity. Positions 1004–1029 (LAAVLEQELPALAENLHQEQKQEQGA) form a coiled coil. Basic and acidic residues predominate over residues 1123–1134 (VEKEAVSPRSEE). Positions 1123–1157 (VEKEAVSPRSEELSNEGDSQQSPGQQSPLPVEPEQ) are disordered. Phosphoserine occurs at positions 1129 and 1149. Positions 1141–1151 (SQQSPGQQSPL) are enriched in low complexity. Positions 1166 to 1205 (LSLLRAETDRLREILAGKEREYQALVQRALQRLNEEARTY) form a coiled coil.

The protein belongs to the protein kinase superfamily. STE Ser/Thr protein kinase family. MAP kinase kinase kinase subfamily. In terms of assembly, binds both upstream activators and downstream substrates in multimolecular complexes. Mg(2+) is required as a cofactor.

It carries out the reaction L-seryl-[protein] + ATP = O-phospho-L-seryl-[protein] + ADP + H(+). It catalyses the reaction L-threonyl-[protein] + ATP = O-phospho-L-threonyl-[protein] + ADP + H(+). Activated by phosphorylation on Thr-806. Catalytically active only when complexed with MAP3K5, with MAP3K5 supporting the stability and the active configuration of MAP3K6 and MAP3K6 activating MAP3K5 by direct phosphorylation. Component of a protein kinase signal transduction cascade. Activates the JNK, but not ERK or p38 kinase pathways. The chain is Mitogen-activated protein kinase kinase kinase 6 (MAP3K6) from Homo sapiens (Human).